The following is a 396-amino-acid chain: MVVRHSSDKGKIGVGVPLEPFLHQVGGHLSVLQYDAYTVCKPLVSQEQKFYESLPLAMKCFTPKYKGTITVRLRRDSRGHLGLVANPLKENLEPFQVSPESRAVALWQTLQQTTGSESSPCPLTQLARSLKESAAKVLLRSDCHLSTQASPLVESEDGSQVERKGFNPWGLHCHQAHLTRLCSQYPEDKRHRFLLLENVVSQYKQPCILDLKMGTRQHGDDASEEKKARHMKKCAQSTSACLGVRICGMQVYQTDQKSFLCKDKYYGRKLSVEGFRQALSQFLHDGTRLRAELLEPILRRLQALLTVIRSQSSYRFYSSSVLIIYDGEPPQTTQGSTSGGVTSGDPAKVDVRMIDFAHTTFKGSWNEHTTYEGPDPGYIFGLENLIGILRDIQEGE.

Pro-206 to Gly-214 is a binding site for substrate.

This sequence belongs to the inositol phosphokinase (IPK) family. Highly expressed in cerebellum, brain cortex, kidney, thymus and lung. Detected at lower levels in hippocampus, testis, heart and olfactory bulb.

It is found in the cytoplasm. The enzyme catalyses 1D-myo-inositol hexakisphosphate + ATP = 5-diphospho-1D-myo-inositol 1,2,3,4,6-pentakisphosphate + ADP. The catalysed reaction is 1-diphospho-1D-myo-inositol 2,3,4,5,6-pentakisphosphate + ATP + H(+) = 1,5-bis(diphospho)-1D-myo-inositol 2,3,4,6-tetrakisphosphate + ADP. In terms of biological role, converts inositol hexakisphosphate (InsP6) to diphosphoinositol pentakisphosphate (InsP7/PP-InsP5). Converts 1,3,4,5,6-pentakisphosphate (InsP5) to PP-InsP4. This chain is Inositol hexakisphosphate kinase 3 (Ip6k3), found in Mus musculus (Mouse).